Reading from the N-terminus, the 547-residue chain is Pyochelin synthase PchD (547 aa).

It belongs to the ATP-dependent AMP-binding enzyme family.

The enzyme catalyses salicylate + holo-[ACP] + ATP = salicyl-[ACP] + AMP + diphosphate. It functions in the pathway siderophore biosynthesis. It participates in antifungal biosynthesis. Involved in the biosynthesis of the siderophore pyochelin. Specifically adenylates salicylate and loads it onto the holo form of PchE via a thioester linkage to the phosphopanthetheine moiety. Is also involved in the synthesis of the antifungal antibiotic dihydroaeruginoic acid (Dha or hydroxyphenyl-thiazolinyl-carboxylate), a precursor of pyochelin. This is Pyochelin synthase PchD from Pseudomonas aeruginosa (strain ATCC 15692 / DSM 22644 / CIP 104116 / JCM 14847 / LMG 12228 / 1C / PRS 101 / PAO1).